We begin with the raw amino-acid sequence, 371 residues long: Glutamate 5-kinase (371 aa).

Lys8 is an ATP binding site. Residues Ser49, Asp136, and Asn149 each coordinate substrate. ATP-binding positions include 169-170 (TD) and 213-219 (TGGMATK). The 79-residue stretch at 278 to 356 (TGKLILDDGA…EDIPQVLGYA (79 aa)) folds into the PUA domain.

Belongs to the glutamate 5-kinase family.

Its subcellular location is the cytoplasm. It catalyses the reaction L-glutamate + ATP = L-glutamyl 5-phosphate + ADP. Its pathway is amino-acid biosynthesis; L-proline biosynthesis; L-glutamate 5-semialdehyde from L-glutamate: step 1/2. Its function is as follows. Catalyzes the transfer of a phosphate group to glutamate to form L-glutamate 5-phosphate. In Acaryochloris marina (strain MBIC 11017), this protein is Glutamate 5-kinase.